The following is a 221-amino-acid chain: Serine/arginine-rich splicing factor 9 (221 aa).

2 consecutive RRM domains span residues 14 to 89 (GRIY…FPRT) and 111 to 187 (FRVL…PERS). A Glycyl lysine isopeptide (Lys-Gly) (interchain with G-Cter in SUMO2) cross-link involves residue Lys-36. The segment at 188–200 (TSYGYSRSRSGSR) is interaction with SAFB1. Ser-189 carries the phosphoserine modification. Over residues 189 to 198 (SYGYSRSRSG) the composition is skewed to low complexity. Positions 189 to 221 (SYGYSRSRSGSRGRDSPYQSRGSPHYFSPFRPY) are disordered. Phosphotyrosine is present on Tyr-192. Phosphoserine occurs at positions 193, 195, 204, 208, and 211. Tyr-214 is modified (phosphotyrosine). Position 216 is a phosphoserine (Ser-216).

Belongs to the splicing factor SR family. Interacts with KHDRBS3. Interacts with HABP4. Interacts with NOL3/ARC/NOP30. Interacts with NSEP1/YB-1/YB1. Interacts with SAFB/SAFB1. Interacts with SRSF6/SFRS6. Interacts with TRA2B/SFRS10. Interacts with C1QBP. May also interact with DUSP11/PIR1. In terms of processing, extensively phosphorylated on serine residues in the RS domain. Expressed at high levels in the heart, kidney, pancreas and placenta, and at lower levels in the brain, liver, lung and skeletal muscle.

Its subcellular location is the nucleus. Plays a role in constitutive splicing and can modulate the selection of alternative splice sites. Represses the splicing of MAPT/Tau exon 10. The protein is Serine/arginine-rich splicing factor 9 (SRSF9) of Homo sapiens (Human).